We begin with the raw amino-acid sequence, 265 residues long: 5'-nucleotidase SurE (265 aa).

4 residues coordinate a divalent metal cation: aspartate 8, aspartate 9, serine 41, and asparagine 100.

The protein belongs to the SurE nucleotidase family. Requires a divalent metal cation as cofactor.

It localises to the cytoplasm. It catalyses the reaction a ribonucleoside 5'-phosphate + H2O = a ribonucleoside + phosphate. Its function is as follows. Nucleotidase that shows phosphatase activity on nucleoside 5'-monophosphates. The polypeptide is 5'-nucleotidase SurE (Brevibacillus brevis (strain 47 / JCM 6285 / NBRC 100599)).